The primary structure comprises 630 residues: ATP-dependent zinc metalloprotease FtsH (630 aa).

The Cytoplasmic segment spans residues 1–7 (MNNFMKN). A helical membrane pass occupies residues 8–28 (IGFYLVLIALSILVAQFFVDT). The Periplasmic segment spans residues 29–111 (DVNTIVDTDV…KTEPEPTAPW (83 aa)). The chain crosses the membrane as a helical span at residues 112-132 (WTGMLAYILPIILLIGAWFFI). At 133 to 630 (MQRMQGGGSQ…ENREHENNDK (498 aa)) the chain is on the cytoplasmic side. 203-210 (GPPGTGKT) provides a ligand contact to ATP. His425 lines the Zn(2+) pocket. Glu426 is a catalytic residue. 2 residues coordinate Zn(2+): His429 and Asp501. Positions 601 to 630 (KLIKGEPLDDDSIDNSTDENENREHENNDK) are disordered. Acidic residues predominate over residues 608–619 (LDDDSIDNSTDE). The segment covering 620–630 (NENREHENNDK) has biased composition (basic and acidic residues).

This sequence in the central section; belongs to the AAA ATPase family. In the C-terminal section; belongs to the peptidase M41 family. Homohexamer. Zn(2+) is required as a cofactor.

It is found in the cell inner membrane. Acts as a processive, ATP-dependent zinc metallopeptidase for both cytoplasmic and membrane proteins. Plays a role in the quality control of integral membrane proteins. The protein is ATP-dependent zinc metalloprotease FtsH of Halothermothrix orenii (strain H 168 / OCM 544 / DSM 9562).